The following is a 245-amino-acid chain: Phosphoadenosine 5'-phosphosulfate reductase (245 aa).

The active-site Nucleophile; cysteine thiosulfonate intermediate is Cys-239.

It belongs to the PAPS reductase family. CysH subfamily.

The protein localises to the cytoplasm. The enzyme catalyses [thioredoxin]-disulfide + sulfite + adenosine 3',5'-bisphosphate + 2 H(+) = [thioredoxin]-dithiol + 3'-phosphoadenylyl sulfate. Its pathway is sulfur metabolism; hydrogen sulfide biosynthesis; sulfite from sulfate: step 3/3. Catalyzes the formation of sulfite from phosphoadenosine 5'-phosphosulfate (PAPS) using thioredoxin as an electron donor. This Shewanella oneidensis (strain ATCC 700550 / JCM 31522 / CIP 106686 / LMG 19005 / NCIMB 14063 / MR-1) protein is Phosphoadenosine 5'-phosphosulfate reductase.